Reading from the N-terminus, the 490-residue chain is Betaine aldehyde dehydrogenase (490 aa).

Positions 26, 27, and 93 each coordinate K(+). 150–152 (GAW) is an NAD(+) binding site. The active-site Charge relay system is K162. Residue 176-179 (KPSE) coordinates NAD(+). Residue V180 participates in K(+) binding. 230–233 (GTST) is an NAD(+) binding site. L246 contributes to the K(+) binding site. E252 (proton acceptor) is an active-site residue. G254, C286, and E387 together coordinate NAD(+). The Nucleophile role is filled by C286. C286 bears the Cysteine sulfenic acid (-SOH) mark. K457 and G460 together coordinate K(+). E464 serves as the catalytic Charge relay system.

It belongs to the aldehyde dehydrogenase family. In terms of assembly, dimer of dimers. Requires K(+) as cofactor.

It catalyses the reaction betaine aldehyde + NAD(+) + H2O = glycine betaine + NADH + 2 H(+). The protein operates within amine and polyamine biosynthesis; betaine biosynthesis via choline pathway; betaine from betaine aldehyde: step 1/1. Involved in the biosynthesis of the osmoprotectant glycine betaine. Catalyzes the irreversible oxidation of betaine aldehyde to the corresponding acid. In Pseudomonas aeruginosa (strain UCBPP-PA14), this protein is Betaine aldehyde dehydrogenase.